Reading from the N-terminus, the 155-residue chain is SsrA-binding protein (155 aa).

Belongs to the SmpB family.

It is found in the cytoplasm. Its function is as follows. Required for rescue of stalled ribosomes mediated by trans-translation. Binds to transfer-messenger RNA (tmRNA), required for stable association of tmRNA with ribosomes. tmRNA and SmpB together mimic tRNA shape, replacing the anticodon stem-loop with SmpB. tmRNA is encoded by the ssrA gene; the 2 termini fold to resemble tRNA(Ala) and it encodes a 'tag peptide', a short internal open reading frame. During trans-translation Ala-aminoacylated tmRNA acts like a tRNA, entering the A-site of stalled ribosomes, displacing the stalled mRNA. The ribosome then switches to translate the ORF on the tmRNA; the nascent peptide is terminated with the 'tag peptide' encoded by the tmRNA and targeted for degradation. The ribosome is freed to recommence translation, which seems to be the essential function of trans-translation. The chain is SsrA-binding protein from Streptococcus agalactiae serotype Ia (strain ATCC 27591 / A909 / CDC SS700).